The sequence spans 570 residues: Urease subunit alpha (570 aa).

In terms of domain architecture, Urease spans 131-570 (GGMDSHIHFI…LPMAQRYFLF (440 aa)). Ni(2+) contacts are provided by His-136, His-138, and Lys-219. The residue at position 219 (Lys-219) is an N6-carboxylysine. His-221 contributes to the substrate binding site. Ni(2+) is bound by residues His-248 and His-274. The active-site Proton donor is the His-322. Asp-362 provides a ligand contact to Ni(2+).

Belongs to the metallo-dependent hydrolases superfamily. Urease alpha subunit family. As to quaternary structure, heterotrimer of UreA (gamma), UreB (beta) and UreC (alpha) subunits. Three heterotrimers associate to form the active enzyme. Requires Ni cation as cofactor. Carboxylation allows a single lysine to coordinate two nickel ions.

The protein resides in the cytoplasm. The enzyme catalyses urea + 2 H2O + H(+) = hydrogencarbonate + 2 NH4(+). The protein operates within nitrogen metabolism; urea degradation; CO(2) and NH(3) from urea (urease route): step 1/1. This is Urease subunit alpha from Rhizobium meliloti (strain 1021) (Ensifer meliloti).